Consider the following 256-residue polypeptide: Major prion protein (256 aa).

The N-terminal stretch at M1 to C24 is a signal peptide. The interval K25–A233 is interaction with GRB2, ERI3 and SYN1. A disordered region spans residues P28–T110. A run of 5 repeats spans residues P54–Q62, P63–Q70, P71–Q78, P79–Q86, and P87–Q95. The 5 X 8 AA tandem repeats of P-H-G-G-G-W-G-Q stretch occupies residues P54–Q95. A compositionally biased stretch (gly residues) spans Q55–G97. The Cu(2+) site is built by H64, G65, G66, H72, G73, G74, H80, G81, G82, H88, G90, and G91. The cysteines at positions 182 and 217 are disulfide-linked. N184 and N200 each carry an N-linked (GlcNAc...) (complex) asparagine glycan. The GPI-anchor amidated alanine moiety is linked to residue A233. Residues S234–G256 constitute a propeptide, removed in mature form.

Belongs to the prion family. In terms of assembly, monomer and homodimer. Has a tendency to aggregate into amyloid fibrils containing a cross-beta spine, formed by a steric zipper of superposed beta-strands. Soluble oligomers may represent an intermediate stage on the path to fibril formation. Copper binding may promote oligomerization. Interacts with GRB2, APP, ERI3/PRNPIP and SYN1. Mislocalized cytosolically exposed PrP interacts with MGRN1; this interaction alters MGRN1 subcellular location and causes lysosomal enlargement. Interacts with KIAA1191.

The protein localises to the cell membrane. The protein resides in the golgi apparatus. Its function is as follows. Its primary physiological function is unclear. Has cytoprotective activity against internal or environmental stresses. May play a role in neuronal development and synaptic plasticity. May be required for neuronal myelin sheath maintenance. May play a role in iron uptake and iron homeostasis. Soluble oligomers are toxic to cultured neuroblastoma cells and induce apoptosis (in vitro). Association with GPC1 (via its heparan sulfate chains) targets PRNP to lipid rafts. Also provides Cu(2+) or Zn(2+) for the ascorbate-mediated GPC1 deaminase degradation of its heparan sulfate side chains. The chain is Major prion protein (PRNP) from Ovis aries (Sheep).